The chain runs to 215 residues: Cytochrome b6 (215 aa).

A helical membrane pass occupies residues 32–52; that stretch reads IFYCLGGITLTCFLVQVATGF. Cysteine 35 lines the heme c pocket. Heme b is bound by residues histidine 86 and histidine 100. A run of 3 helical transmembrane segments spans residues 90–110, 116–136, and 186–206; these read ASMMVLMMILHIFRVYLTGGF, LTWVTGVILAVLTVSFGVTGY, and LHTFVLPLLTAVFMLMHFLMI. Positions 187 and 202 each coordinate heme b.

This sequence belongs to the cytochrome b family. PetB subfamily. In terms of assembly, the 4 large subunits of the cytochrome b6-f complex are cytochrome b6, subunit IV (17 kDa polypeptide, PetD), cytochrome f and the Rieske protein, while the 4 small subunits are PetG, PetL, PetM and PetN. The complex functions as a dimer. Heme b serves as cofactor. It depends on heme c as a cofactor.

It localises to the plastid. Its subcellular location is the chloroplast thylakoid membrane. Functionally, component of the cytochrome b6-f complex, which mediates electron transfer between photosystem II (PSII) and photosystem I (PSI), cyclic electron flow around PSI, and state transitions. The polypeptide is Cytochrome b6 (Physcomitrium patens (Spreading-leaved earth moss)).